The sequence spans 406 residues: Homocysteine-responsive endoplasmic reticulum-resident ubiquitin-like domain member 2 protein (406 aa).

Residues 10–89 (VTLIIKAPNQ…HMVHLVCTSR (80 aa)) enclose the Ubiquitin-like domain. The interval 86–154 (CTSRTPPSSP…TLPQAQTDQA (69 aa)) is disordered. Composition is skewed to low complexity over residues 87–98 (TSRTPPSSPKSS) and 106–126 (ALAS…PSSG). Residues 127–154 (QETLSLAVGSSSEGLRQRTLPQAQTDQA) are compositionally biased toward polar residues. The helical transmembrane segment at 302 to 322 (FIMVMGAMLLVYLHQAGWFPF) threads the bilayer.

It is found in the membrane. Its function is as follows. Could be involved in the unfolded protein response (UPR) pathway. This Homo sapiens (Human) protein is Homocysteine-responsive endoplasmic reticulum-resident ubiquitin-like domain member 2 protein (HERPUD2).